A 168-amino-acid polypeptide reads, in one-letter code: UPF0262 protein BRADO6636 (168 aa).

The protein belongs to the UPF0262 family.

The polypeptide is UPF0262 protein BRADO6636 (Bradyrhizobium sp. (strain ORS 278)).